Reading from the N-terminus, the 476-residue chain is Ubiquinone biosynthesis monooxygenase COQ6, mitochondrial (476 aa).

Residues 1–42 constitute a mitochondrion transit peptide; the sequence is MAARIGPMAGLLCVRWWSTAQLAARGGPLVACRRWTSSSTDS.

Belongs to the UbiH/COQ6 family. In terms of assembly, component of a multi-subunit COQ enzyme complex, composed of at least COQ3, COQ4, COQ5, COQ6, COQ7 and COQ9. Interacts with COQ8B and COQ7. FAD serves as cofactor. In terms of tissue distribution, in the kidney, expressed almost exclusively in glomerular podocytes. In the inner ear, expressed in the spiral ganglion, as well as in stria vascularis and spiral ligament cells.

The protein resides in the mitochondrion inner membrane. The protein localises to the golgi apparatus. It localises to the cell projection. The enzyme catalyses 4-hydroxy-3-(all-trans-decaprenyl)benzoate + 2 reduced [2Fe-2S]-[ferredoxin] + O2 + 2 H(+) = 3,4-dihydroxy-5-(all-trans-decaprenyl)benzoate + 2 oxidized [2Fe-2S]-[ferredoxin] + H2O. It catalyses the reaction 2-methoxy-6-(all-trans-decaprenyl)phenol + 2 reduced [2Fe-2S]-[ferredoxin] + O2 + 2 H(+) = 2-methoxy-6-(all-trans-decaprenyl)benzene-1,4-diol + 2 oxidized [2Fe-2S]-[ferredoxin] + H2O. It functions in the pathway cofactor biosynthesis; ubiquinone biosynthesis. FAD-dependent monooxygenase required for two non-consecutive steps during ubiquinone biosynthesis. Required for the C5-ring hydroxylation during ubiquinone biosynthesis by catalyzing the hydroxylation of 4-hydroxy-3-(all-trans-decaprenyl)benzoic acid to 3,4-dihydroxy-5-(all-trans-decaprenyl)benzoic acid. Also acts downstream of COQ4, for the C1-hydroxylation during ubiquinone biosynthesis by catalyzing the hydroxylation of 2-methoxy-6-(all-trans-decaprenyl)phenol to 2-methoxy-6-(all-trans-decaprenyl)benzene-1,4-diol. The electrons required for the hydroxylation reaction are funneled indirectly to COQ6 from NADPH via a ferredoxin/ferredoxin reductase system composed of FDX2 and FDXR. The chain is Ubiquinone biosynthesis monooxygenase COQ6, mitochondrial from Rattus norvegicus (Rat).